Consider the following 1224-residue polypeptide: Coatomer subunit alpha (1224 aa).

WD repeat units follow at residues 3 to 38 (TKFE…LWDY), 42 to 80 (TLID…VWNY), 84 to 122 (RCLF…VWNW), and 126 to 164 (TCVC…VWDI). S173 bears the Phosphoserine mark. T185 is modified (phosphothreonine). 3 WD repeats span residues 195–234 (AVVK…IWRM), 241–278 (EVDT…VWDM), and 282–319 (TGVQ…VFKL). S402 carries the post-translational modification Phosphoserine. At T591 the chain carries Phosphothreonine. S895 bears the Phosphoserine mark. R965 is modified (omega-N-methylarginine). S1193 is subject to Phosphoserine.

As to quaternary structure, oligomeric complex that consists of at least the alpha, beta, beta', gamma, delta, epsilon and zeta subunits. Interacts with SCYL1. Interacts with JAGN1. Interacts with TMEM41B. Interacts with SVEP1. Probably interacts with PEX11A. In terms of tissue distribution, uniformly expressed in a wide range of adult and fetal tissues. Xenin is found in gastric, duodenal and jejunal mucosa. Circulates in the blood. Seems to be confined to specific endocrine cells.

The protein localises to the cytoplasm. Its subcellular location is the golgi apparatus membrane. It localises to the cytoplasmic vesicle. It is found in the COPI-coated vesicle membrane. The protein resides in the secreted. Its function is as follows. The coatomer is a cytosolic protein complex that binds to dilysine motifs and reversibly associates with Golgi non-clathrin-coated vesicles, which further mediate biosynthetic protein transport from the ER, via the Golgi up to the trans Golgi network. Coatomer complex is required for budding from Golgi membranes, and is essential for the retrograde Golgi-to-ER transport of dilysine-tagged proteins. In mammals, the coatomer can only be recruited by membranes associated to ADP-ribosylation factors (ARFs), which are small GTP-binding proteins; the complex also influences the Golgi structural integrity, as well as the processing, activity, and endocytic recycling of LDL receptors. Xenin stimulates exocrine pancreatic secretion. It inhibits pentagastrin-stimulated secretion of acid, to induce exocrine pancreatic secretion and to affect small and large intestinal motility. In the gut, xenin interacts with the neurotensin receptor. The sequence is that of Coatomer subunit alpha (COPA) from Homo sapiens (Human).